The chain runs to 228 residues: 7-cyano-7-deazaguanine synthase (228 aa).

9–19 contacts ATP; sequence LSGGPDSTTVL. C193, C203, C206, and C209 together coordinate Zn(2+).

This sequence belongs to the QueC family. Requires Zn(2+) as cofactor.

It carries out the reaction 7-carboxy-7-deazaguanine + NH4(+) + ATP = 7-cyano-7-deazaguanine + ADP + phosphate + H2O + H(+). The protein operates within purine metabolism; 7-cyano-7-deazaguanine biosynthesis. In terms of biological role, catalyzes the ATP-dependent conversion of 7-carboxy-7-deazaguanine (CDG) to 7-cyano-7-deazaguanine (preQ(0)). This chain is 7-cyano-7-deazaguanine synthase, found in Rickettsia massiliae (strain Mtu5).